The primary structure comprises 860 residues: Leucine--tRNA ligase (860 aa).

A 'HIGH' region motif is present at residues Pro42 to His52. Residues Lys619 to Ser623 carry the 'KMSKS' region motif. Lys622 is a binding site for ATP.

The protein belongs to the class-I aminoacyl-tRNA synthetase family.

Its subcellular location is the cytoplasm. The enzyme catalyses tRNA(Leu) + L-leucine + ATP = L-leucyl-tRNA(Leu) + AMP + diphosphate. In Cronobacter sakazakii (strain ATCC BAA-894) (Enterobacter sakazakii), this protein is Leucine--tRNA ligase.